The primary structure comprises 286 residues: 4-hydroxybenzoate octaprenyltransferase (286 aa).

7 consecutive transmembrane segments (helical) span residues 22-42 (IGTLLLLWPTLWALYLAEKAM), 45-65 (LSVLAIFIFGVFLMRSAGCVI), 98-118 (LFIVLVFCSFLLVLCLNLYTI), 143-163 (FFLGAAFGWSIPMAYGATIEA), 213-233 (IIALLQIITLIFLFSVGYLSQ), 238-255 (YFIVLAIAGLFFVYQCRL), and 266-286 (NAFLNNNYFGLTVFIAVLFGI).

The protein belongs to the UbiA prenyltransferase family. Mg(2+) serves as cofactor.

The protein localises to the cell inner membrane. It catalyses the reaction all-trans-octaprenyl diphosphate + 4-hydroxybenzoate = 4-hydroxy-3-(all-trans-octaprenyl)benzoate + diphosphate. The protein operates within cofactor biosynthesis; ubiquinone biosynthesis. Its function is as follows. Catalyzes the prenylation of para-hydroxybenzoate (PHB) with an all-trans polyprenyl group. Mediates the second step in the final reaction sequence of ubiquinone-8 (UQ-8) biosynthesis, which is the condensation of the polyisoprenoid side chain with PHB, generating the first membrane-bound Q intermediate 3-octaprenyl-4-hydroxybenzoate. This Histophilus somni (strain 2336) (Haemophilus somnus) protein is 4-hydroxybenzoate octaprenyltransferase.